The chain runs to 198 residues: UPF0314 protein Saro_1818 (198 aa).

Helical transmembrane passes span 13–33 (GGSL…LGMG), 62–82 (WYSF…HIVW), 96–116 (LALA…PIII), 153–173 (APVL…LWAI), and 177–197 (LALN…WQGG).

Belongs to the UPF0314 family.

The protein resides in the cell membrane. The protein is UPF0314 protein Saro_1818 of Novosphingobium aromaticivorans (strain ATCC 700278 / DSM 12444 / CCUG 56034 / CIP 105152 / NBRC 16084 / F199).